The sequence spans 289 residues: Pantothenate synthetase (289 aa).

Residue 30–37 (MGYLHKGH) coordinates ATP. His-37 (proton donor) is an active-site residue. Gln-61 contacts (R)-pantoate. Gln-61 serves as a coordination point for beta-alanine. An ATP-binding site is contributed by 147–150 (GEKD). Position 153 (Gln-153) interacts with (R)-pantoate. Residues Val-176 and 184–187 (CSSR) each bind ATP.

It belongs to the pantothenate synthetase family. Homodimer.

The protein localises to the cytoplasm. The enzyme catalyses (R)-pantoate + beta-alanine + ATP = (R)-pantothenate + AMP + diphosphate + H(+). It participates in cofactor biosynthesis; (R)-pantothenate biosynthesis; (R)-pantothenate from (R)-pantoate and beta-alanine: step 1/1. Its function is as follows. Catalyzes the condensation of pantoate with beta-alanine in an ATP-dependent reaction via a pantoyl-adenylate intermediate. This Brucella anthropi (strain ATCC 49188 / DSM 6882 / CCUG 24695 / JCM 21032 / LMG 3331 / NBRC 15819 / NCTC 12168 / Alc 37) (Ochrobactrum anthropi) protein is Pantothenate synthetase.